The primary structure comprises 630 residues: DNA topoisomerase 4 subunit B (630 aa).

ATP is bound by residues Y5, N42, D69, 110–116, and K334; that span reads GLHGVGI. The Toprim domain maps to 412-525; the sequence is TELFLVEGDS…HGHVYVALPP (114 aa). Positions 418, 490, and 492 each coordinate Mg(2+).

This sequence belongs to the type II topoisomerase family. ParE type 1 subfamily. Heterotetramer composed of ParC and ParE. Mg(2+) serves as cofactor. Mn(2+) is required as a cofactor. The cofactor is Ca(2+).

The enzyme catalyses ATP-dependent breakage, passage and rejoining of double-stranded DNA.. Its activity is regulated as follows. Pyrrolopyrimidines inhibit both GyrB and its paralog in topoisomerase IV (parE). In terms of biological role, topoisomerase IV is essential for chromosome segregation; it is the principal protein responsible for decatenating newly replicated chromosomes. It relaxes supercoiled DNA. MukB stimulates the relaxation activity of topoisomerase IV and also has a modest effect on decatenation. This is DNA topoisomerase 4 subunit B from Escherichia coli (strain K12).